Consider the following 343-residue polypeptide: Pentatricopeptide repeat-containing protein At1g06270 (343 aa).

PPR repeat units lie at residues 98–133 (PKIV…GCLP), 134–169 (NPQT…GYSP), 170–204 (DTGT…GCIP), 205–240 (DVES…GISP), 241–275 (RKGM…DYPV), and 276–310 (EFES…GFIP).

This sequence belongs to the PPR family. P subfamily.

This chain is Pentatricopeptide repeat-containing protein At1g06270, found in Arabidopsis thaliana (Mouse-ear cress).